The sequence spans 248 residues: 3-deoxy-manno-octulosonate cytidylyltransferase (248 aa).

The protein belongs to the KdsB family.

The protein resides in the cytoplasm. The catalysed reaction is 3-deoxy-alpha-D-manno-oct-2-ulosonate + CTP = CMP-3-deoxy-beta-D-manno-octulosonate + diphosphate. It participates in nucleotide-sugar biosynthesis; CMP-3-deoxy-D-manno-octulosonate biosynthesis; CMP-3-deoxy-D-manno-octulosonate from 3-deoxy-D-manno-octulosonate and CTP: step 1/1. Its pathway is bacterial outer membrane biogenesis; lipopolysaccharide biosynthesis. In terms of biological role, activates KDO (a required 8-carbon sugar) for incorporation into bacterial lipopolysaccharide in Gram-negative bacteria. The chain is 3-deoxy-manno-octulosonate cytidylyltransferase from Salmonella dublin (strain CT_02021853).